Reading from the N-terminus, the 846-residue chain is Protein IRS1 (846 aa).

Disordered stretches follow at residues 1–82, 366–385, 606–626, and 714–846; these read MAQR…NFWH, TGTA…ETEA, WLME…ATMP, and QVIP…HVHH. Positions 16-25 are enriched in gly residues; it reads RGRGAGGPSG. Residues 26–56 are compositionally biased toward low complexity; the sequence is VGSSPPSSCVPMGAPSTAGTGASAAATTTPG. A compositionally biased stretch (acidic residues) spans 722-732; sequence EPEDDDEDPTY. Basic residues predominate over residues 832–846; sequence RPKKCQTHAPHHVHH.

This sequence belongs to the herpesviridae US22 family. Interacts (via N-terminus) with the viral DNA polymerase accessory subunit UL44. Interacts (via C-terminus) with host EIF2AK2/PKR.

The protein localises to the virion. It is found in the host cytoplasm. Its subcellular location is the host nucleus. Inhibits the establishment of the antiviral state in the infected cell. Prevents the phosphorylation of the host eukaryotic translation initiation factor eIF-2alpha and thus the shutoff of viral and cellular protein synthesis by directly interacting with EIF2AK2/PKR. May also participate in viral DNA replication by interacting with the DNA polymerase accessory protein and the lytic origin of replication, oriLyt. This Homo sapiens (Human) protein is Protein IRS1 (IRS1).